A 502-amino-acid polypeptide reads, in one-letter code: Probable cytochrome P450 313b1 (502 aa).

Cysteine 449 is a binding site for heme.

This sequence belongs to the cytochrome P450 family. It depends on heme as a cofactor.

The protein localises to the endoplasmic reticulum membrane. Its subcellular location is the microsome membrane. In terms of biological role, may be involved in the metabolism of insect hormones and in the breakdown of synthetic insecticides. The polypeptide is Probable cytochrome P450 313b1 (Cyp313b1) (Drosophila melanogaster (Fruit fly)).